A 441-amino-acid chain; its full sequence is Protein translocase subunit SecY (441 aa).

The next 10 membrane-spanning stretches (helical) occupy residues I18–G38, A78–I98, I124–L144, I157–M177, L180–A200, G215–V235, V272–I292, L318–I338, I382–T402, and V403–T423.

It belongs to the SecY/SEC61-alpha family. As to quaternary structure, component of the Sec protein translocase complex. Heterotrimer consisting of SecY, SecE and SecG subunits. The heterotrimers can form oligomers, although 1 heterotrimer is thought to be able to translocate proteins. Interacts with the ribosome. Interacts with SecDF, and other proteins may be involved. Interacts with SecA.

It is found in the cell membrane. Its function is as follows. The central subunit of the protein translocation channel SecYEG. Consists of two halves formed by TMs 1-5 and 6-10. These two domains form a lateral gate at the front which open onto the bilayer between TMs 2 and 7, and are clamped together by SecE at the back. The channel is closed by both a pore ring composed of hydrophobic SecY resides and a short helix (helix 2A) on the extracellular side of the membrane which forms a plug. The plug probably moves laterally to allow the channel to open. The ring and the pore may move independently. This Mycobacterium bovis (strain ATCC BAA-935 / AF2122/97) protein is Protein translocase subunit SecY.